Consider the following 402-residue polypeptide: Speedy protein E2 (402 aa).

The segment at 1–89 is disordered; it reads MDRTETRFRK…EEPEKELAPE (89 aa). Residues 16–39 are compositionally biased toward polar residues; the sequence is GKITTSRQPHPQNEQSPQRSTSGY. Positions 76–89 are enriched in acidic residues; the sequence is DESEEEPEKELAPE.

It belongs to the Speedy/Ringo family.

This Homo sapiens (Human) protein is Speedy protein E2 (SPDYE2).